We begin with the raw amino-acid sequence, 395 residues long: uncharacterized protein (395 aa).

The next 7 membrane-spanning stretches (helical) occupy residues 42-62 (LKYVLVYLLSIINAFLLLIFI), 67-87 (LYSFGISSLTQGFARLVFVLL), 97-117 (LIFNILYWLLYVFINIPLIIF), 128-148 (ILSTHFVVASNVFGFLISIIP), 196-216 (FIYAAIYGFYNGISVSLLYIL), 241-261 (ILFYVNSFILIIAILIGSFVA), and 281-301 (LFFSPNLIATFFSILLTGTVV).

The protein resides in the cell membrane. This is an uncharacterized protein from Mycoplasma genitalium (strain ATCC 33530 / DSM 19775 / NCTC 10195 / G37) (Mycoplasmoides genitalium).